Here is a 192-residue protein sequence, read N- to C-terminus: dTTP/UTP pyrophosphatase (192 aa).

Catalysis depends on D70, which acts as the Proton acceptor.

This sequence belongs to the Maf family. YhdE subfamily. Requires a divalent metal cation as cofactor.

The protein localises to the cytoplasm. It catalyses the reaction dTTP + H2O = dTMP + diphosphate + H(+). It carries out the reaction UTP + H2O = UMP + diphosphate + H(+). Functionally, nucleoside triphosphate pyrophosphatase that hydrolyzes dTTP and UTP. May have a dual role in cell division arrest and in preventing the incorporation of modified nucleotides into cellular nucleic acids. The sequence is that of dTTP/UTP pyrophosphatase from Alkaliphilus oremlandii (strain OhILAs) (Clostridium oremlandii (strain OhILAs)).